Reading from the N-terminus, the 71-residue chain is Protein CYSTEINE-RICH TRANSMEMBRANE MODULE 3 (71 aa).

A disordered region spans residues 30-49 (VMMKDSPQTVQPPHEGQSKG). Residues 48 to 64 (KGSGGFLRGCLAAMCCC) form a helical membrane-spanning segment.

This sequence belongs to the CYSTM1 family. Heterodimers. Interacts with CYSTM7 and WIH1/CYSTM13. In terms of tissue distribution, mostly expressed in leaves and flowers and, to a lower extent, in stems, siliques, shoots and roots.

It is found in the cell membrane. Its subcellular location is the cytoplasm. The protein localises to the mitochondrion. Functionally, negatively regulates salt stress responses and Na(+) homeostasis. Prevents Na(+) efflux, disturbs reactive oxygen species (ROS) homeostasis, and represses the expression of nuclear salt stress-responsive genes. Involved in resistance to abiotic stress. In Arabidopsis thaliana (Mouse-ear cress), this protein is Protein CYSTEINE-RICH TRANSMEMBRANE MODULE 3.